The following is a 501-amino-acid chain: MSVELWQQCVELLRDELPAQQFNTWIRPLQVEAEGDELRVYAPNRFVLDWVNEKYLSRVLELLDEHGNGLAPVLSLLIGSKRSSAPRAAPNAPLAAAASQAQAAPVASTPAPAPSKSSAKKNAAENEEPSRDSFDPMAGASSQQAPIRAEQRTVQVEGALKHTSYLNRTFTFENFVEGKSNQLARAAAWQVADNPKHGYNPLFLYGGVGLGKTHLMHAVGNHLLKKNPNAKVVYLHSERFVADMVKALQLNAINEFKRFYRSVDALLIDDIQFFARKERSQEEFFHTFNALLEGGQQVILTSDRYPKEIEGLEERLKSRFGWGLTVAVEPPELETRVAILMKKADQAKVDLPHDAAFFIAQRIRSNVRELEGALKRVIAHSHFMGRDITIELIRESLKDLLALQDKLVSVDNIQRTVAEYYKIKISDLLSKRRSRSVARPRQVAMALSKELTNHSLPEIGDVFGGRDHTTVLHACRKINELKESDADIREDYKNLLRTLTT.

The segment at M1 to P90 is domain I, interacts with DnaA modulators. The tract at residues N91–S164 is domain II. Over residues A103 to K121 the composition is skewed to low complexity. The interval A103–E150 is disordered. Basic and acidic residues predominate over residues N122–F134. A domain III, AAA+ region region spans residues Y165–S381. Positions 209, 211, 212, and 213 each coordinate ATP. The interval H382–T501 is domain IV, binds dsDNA.

It belongs to the DnaA family. Oligomerizes as a right-handed, spiral filament on DNA at oriC.

The protein resides in the cytoplasm. Its function is as follows. Plays an essential role in the initiation and regulation of chromosomal replication. ATP-DnaA binds to the origin of replication (oriC) to initiate formation of the DNA replication initiation complex once per cell cycle. Binds the DnaA box (a 9 base pair repeat at the origin) and separates the double-stranded (ds)DNA. Forms a right-handed helical filament on oriC DNA; dsDNA binds to the exterior of the filament while single-stranded (ss)DNA is stabiized in the filament's interior. The ATP-DnaA-oriC complex binds and stabilizes one strand of the AT-rich DNA unwinding element (DUE), permitting loading of DNA polymerase. After initiation quickly degrades to an ADP-DnaA complex that is not apt for DNA replication. Binds acidic phospholipids. The polypeptide is Chromosomal replication initiator protein DnaA (Pseudomonas fluorescens (strain SBW25)).